A 126-amino-acid polypeptide reads, in one-letter code: Histone H2B (126 aa).

Positions 1–12 are enriched in low complexity; sequence MPEPAKSAPAPK. The tract at residues 1-36 is disordered; it reads MPEPAKSAPAPKKGSKKAVTKTQKKGDKKRKKSRKE. Lys6 and Lys13 each carry N6-acetyllysine. A compositionally biased stretch (basic residues) spans 13 to 34; that stretch reads KGSKKAVTKTQKKGDKKRKKSR. Ser15 is subject to Phosphoserine. An N6-acetyllysine mark is found at Lys16 and Lys21. Residue Lys121 forms a Glycyl lysine isopeptide (Lys-Gly) (interchain with G-Cter in ubiquitin) linkage.

Belongs to the histone H2B family. In terms of assembly, the nucleosome is a histone octamer containing two molecules each of H2A, H2B, H3 and H4 assembled in one H3-H4 heterotetramer and two H2A-H2B heterodimers. The octamer wraps approximately 147 bp of DNA. Post-translationally, monoubiquitination of Lys-121 by the RNF20/40 complex gives a specific tag for epigenetic transcriptional activation and is also prerequisite for histone H3 'Lys-4' and 'Lys-79' methylation. In terms of processing, phosphorylated on Ser-15 during apoptosis; which facilitates apoptotic chromatin condensation.

It localises to the nucleus. The protein resides in the chromosome. Its function is as follows. Core component of nucleosome. Nucleosomes wrap and compact DNA into chromatin, limiting DNA accessibility to the cellular machineries which require DNA as a template. Histones thereby play a central role in transcription regulation, DNA repair, DNA replication and chromosomal stability. DNA accessibility is regulated via a complex set of post-translational modifications of histones, also called histone code, and nucleosome remodeling. The protein is Histone H2B of Cairina moschata (Muscovy duck).